Here is a 183-residue protein sequence, read N- to C-terminus: MSVVVGGVEYSLNNWAKYEIKRRAAELESVNYYPRCEYIMPEDIVVSILGSKPNCPFLEALKRFHDFLNKRRIIFKEGYLVIPWMGAQDVADMIHHVENRINLGHLEDLAHMLKLITYHKSLDTSINQSFENLYAFKFPDANIETHELKLIRQLEKKMYGYILRLEKLQTMLTFYIEFLLKQV.

Belongs to the asfivirus S183L family.

This is an uncharacterized protein from African swine fever virus (isolate Pig/Kenya/KEN-50/1950) (ASFV).